The chain runs to 431 residues: Histidinol dehydrogenase (431 aa).

NAD(+)-binding residues include Y127, Q185, and N208. Positions 234, 256, and 259 each coordinate substrate. Positions 256 and 259 each coordinate Zn(2+). Catalysis depends on proton acceptor residues E323 and H324. H324, D357, E411, and H416 together coordinate substrate. D357 is a Zn(2+) binding site. H416 is a binding site for Zn(2+).

The protein belongs to the histidinol dehydrogenase family. Zn(2+) serves as cofactor.

The enzyme catalyses L-histidinol + 2 NAD(+) + H2O = L-histidine + 2 NADH + 3 H(+). It functions in the pathway amino-acid biosynthesis; L-histidine biosynthesis; L-histidine from 5-phospho-alpha-D-ribose 1-diphosphate: step 9/9. Its function is as follows. Catalyzes the sequential NAD-dependent oxidations of L-histidinol to L-histidinaldehyde and then to L-histidine. The chain is Histidinol dehydrogenase from Vibrio parahaemolyticus serotype O3:K6 (strain RIMD 2210633).